Reading from the N-terminus, the 354-residue chain is UDP-N-acetylglucosamine--N-acetylmuramyl-(pentapeptide) pyrophosphoryl-undecaprenol N-acetylglucosamine transferase (354 aa).

UDP-N-acetyl-alpha-D-glucosamine is bound by residues 15-17, Asn-127, Arg-163, Ser-191, Ile-244, 263-268, and Gln-288; these read TGG and ALTVSE.

Belongs to the glycosyltransferase 28 family. MurG subfamily.

It is found in the cell inner membrane. It carries out the reaction di-trans,octa-cis-undecaprenyl diphospho-N-acetyl-alpha-D-muramoyl-L-alanyl-D-glutamyl-meso-2,6-diaminopimeloyl-D-alanyl-D-alanine + UDP-N-acetyl-alpha-D-glucosamine = di-trans,octa-cis-undecaprenyl diphospho-[N-acetyl-alpha-D-glucosaminyl-(1-&gt;4)]-N-acetyl-alpha-D-muramoyl-L-alanyl-D-glutamyl-meso-2,6-diaminopimeloyl-D-alanyl-D-alanine + UDP + H(+). The protein operates within cell wall biogenesis; peptidoglycan biosynthesis. Cell wall formation. Catalyzes the transfer of a GlcNAc subunit on undecaprenyl-pyrophosphoryl-MurNAc-pentapeptide (lipid intermediate I) to form undecaprenyl-pyrophosphoryl-MurNAc-(pentapeptide)GlcNAc (lipid intermediate II). This Aliivibrio salmonicida (strain LFI1238) (Vibrio salmonicida (strain LFI1238)) protein is UDP-N-acetylglucosamine--N-acetylmuramyl-(pentapeptide) pyrophosphoryl-undecaprenol N-acetylglucosamine transferase.